The primary structure comprises 271 residues: MRFTEQLAAAWQRNNSLLCVGLDPDPARLPASLTTSGGAIFSFCRAIVDATADLVCAFKPQIAYFASQRAEDQLEQLIAYIHEAYPGIPVILDAKRGDIGSTAEHYAKEAFERYQADAVTVSPYMGFDSMQPYLVHPDKGVIVLCRTSNAGGSDVQFLETNGRPVYQVVAERARDAWNTSGQMGLVVGATFPQEIRRVREIVGDMPLLIPGIGVQGGDIEATVRAGRTADGTGMMINSSRAILYASSDSDFADAARGVAQATRDQINQYRN.

The active-site Proton donor is the Lys95.

Belongs to the OMP decarboxylase family. Type 2 subfamily.

It catalyses the reaction orotidine 5'-phosphate + H(+) = UMP + CO2. It functions in the pathway pyrimidine metabolism; UMP biosynthesis via de novo pathway; UMP from orotate: step 2/2. The chain is Orotidine 5'-phosphate decarboxylase (pyrF) from Ralstonia nicotianae (strain ATCC BAA-1114 / GMI1000) (Ralstonia solanacearum).